A 476-amino-acid chain; its full sequence is Nitrosuccinate lyase (476 aa).

3 residues coordinate fumarate: R137, R140, and R201. S302 acts as the Proton acceptor in catalysis. Positions 308 and 310 each coordinate fumarate. R341 (proton donor) is an active-site residue.

The protein belongs to the class-II fumarase/aspartase family. In terms of assembly, homotetramer.

The catalysed reaction is 2-nitrobutanedioate = fumarate + nitrite + H(+). It participates in antibiotic biosynthesis. Part of a gene cluster involved in the biosynthesis of cremeomycin, a light-sensitive o-diazoquinone with antibacterial and antiproliferative effects. Catalyzes the formation of nitrous acid from nitrosuccinic acid (2-nitrobutanedioate) by elimination of its nitro group. In Streptomyces cremeus, this protein is Nitrosuccinate lyase.